We begin with the raw amino-acid sequence, 160 residues long: SsrA-binding protein (160 aa).

This sequence belongs to the SmpB family.

The protein localises to the cytoplasm. Its function is as follows. Required for rescue of stalled ribosomes mediated by trans-translation. Binds to transfer-messenger RNA (tmRNA), required for stable association of tmRNA with ribosomes. tmRNA and SmpB together mimic tRNA shape, replacing the anticodon stem-loop with SmpB. tmRNA is encoded by the ssrA gene; the 2 termini fold to resemble tRNA(Ala) and it encodes a 'tag peptide', a short internal open reading frame. During trans-translation Ala-aminoacylated tmRNA acts like a tRNA, entering the A-site of stalled ribosomes, displacing the stalled mRNA. The ribosome then switches to translate the ORF on the tmRNA; the nascent peptide is terminated with the 'tag peptide' encoded by the tmRNA and targeted for degradation. The ribosome is freed to recommence translation, which seems to be the essential function of trans-translation. This is SsrA-binding protein from Dinoroseobacter shibae (strain DSM 16493 / NCIMB 14021 / DFL 12).